Here is a 152-residue protein sequence, read N- to C-terminus: Probable spermine N(1)-acetyltransferase (152 aa).

The region spanning 3 to 152 (INIKAVTDDN…NGEKVMVKEL (150 aa)) is the N-acetyltransferase domain. Acetyl-CoA is bound by residues 82–84 (FFI), 89–95 (QGKGLGK), and 122–131 (NIHAIRLYQR). Y129 serves as the catalytic Proton donor.

It belongs to the acetyltransferase family.

It catalyses the reaction an alkane-alpha,omega-diamine + acetyl-CoA = an N-acetylalkane-alpha,omega-diamine + CoA + H(+). It carries out the reaction spermine + acetyl-CoA = N(1)-acetylspermine + CoA + H(+). The protein operates within amine and polyamine degradation; spermine degradation. Probably acetylates spermine to N(1)-acetylspermine. This chain is Probable spermine N(1)-acetyltransferase, found in Bacillus subtilis subsp. natto (strain BEST195).